A 36-amino-acid polypeptide reads, in one-letter code: MAASFLPSILVPLVGLIFPAFSMALFFLYVQTDDIA.

A helical transmembrane segment spans residues 9–29 (ILVPLVGLIFPAFSMALFFLY).

It belongs to the PsaI family.

The protein resides in the plastid. It is found in the chloroplast thylakoid membrane. Its function is as follows. May help in the organization of the PsaL subunit. This is Photosystem I reaction center subunit VIII from Thalassiosira pseudonana (Marine diatom).